A 235-amino-acid chain; its full sequence is Small ribosomal subunit protein uS3 (235 aa).

One can recognise a KH type-2 domain in the interval 39 to 107 (VRKFLLGQLS…PTKLNISEIR (69 aa)).

This sequence belongs to the universal ribosomal protein uS3 family. As to quaternary structure, part of the 30S ribosomal subunit. Forms a tight complex with proteins S10 and S14.

Functionally, binds the lower part of the 30S subunit head. Binds mRNA in the 70S ribosome, positioning it for translation. The chain is Small ribosomal subunit protein uS3 from Blochmanniella floridana.